Consider the following 203-residue polypeptide: MNVPFVIETTHRGERAYDLYSRLLKDRIIMLGTPVNDDVANIIVAQLLFLESEDPDKGINLYINSPGGSVTAGLAIYDTMQYVKCPVSTICVGQAASMGALLLLAGAKGKRYALPNSRIMIHQPLGGAQGQATDIDIQAKEILRLRSYINGLIVKHTGHTIERIEKDTERDYFMSAEDARQYGLIDEVVEKQRVIAPTPAPAK.

Catalysis depends on Ser97, which acts as the Nucleophile. Residue His122 is part of the active site.

The protein belongs to the peptidase S14 family. Fourteen ClpP subunits assemble into 2 heptameric rings which stack back to back to give a disk-like structure with a central cavity, resembling the structure of eukaryotic proteasomes.

Its subcellular location is the cytoplasm. It catalyses the reaction Hydrolysis of proteins to small peptides in the presence of ATP and magnesium. alpha-casein is the usual test substrate. In the absence of ATP, only oligopeptides shorter than five residues are hydrolyzed (such as succinyl-Leu-Tyr-|-NHMec, and Leu-Tyr-Leu-|-Tyr-Trp, in which cleavage of the -Tyr-|-Leu- and -Tyr-|-Trp bonds also occurs).. Functionally, cleaves peptides in various proteins in a process that requires ATP hydrolysis. Has a chymotrypsin-like activity. Plays a major role in the degradation of misfolded proteins. The sequence is that of ATP-dependent Clp protease proteolytic subunit 2 from Myxococcus xanthus (strain DK1622).